We begin with the raw amino-acid sequence, 215 residues long: L-fuculose phosphate aldolase (215 aa).

Substrate is bound by residues 28 to 29, 43 to 44, and 71 to 72; these read GN, TG, and SS. Glutamate 73 (proton donor/acceptor) is an active-site residue. 4 residues coordinate Zn(2+): glutamate 73, histidine 92, histidine 94, and histidine 155.

The protein belongs to the aldolase class II family. AraD/FucA subfamily. Homotetramer. It depends on Zn(2+) as a cofactor.

It carries out the reaction L-fuculose 1-phosphate = (S)-lactaldehyde + dihydroxyacetone phosphate. Its pathway is carbohydrate degradation; L-fucose degradation; L-lactaldehyde and glycerone phosphate from L-fucose: step 3/3. Involved in the degradation of L-fucose and D-arabinose. Catalyzes the reversible cleavage of L-fuculose 1-phosphate (Fuc1P) to yield dihydroxyacetone phosphate (DHAP) and L-lactaldehyde. The sequence is that of L-fuculose phosphate aldolase from Escherichia coli O157:H7.